Here is a 164-residue protein sequence, read N- to C-terminus: MSCDEGKLFVGGLSFDTDEQCLETVFSKYGQIQEVVVVKDRETKRSRGFGFVTFENCEDAKDAMAGMNGKTVDGRQIRVDQAGKSSNDRRGGYRGGSSGGGRGFFRGGRGRGGGGYGGSSRFDNRSGGGYGGWIPDYYSSGRESSYGDRSAGGRSYRDSYDSYG.

An RRM domain is found at 6–84 (GKLFVGGLSF…RQIRVDQAGK (79 aa)). The segment at 65–164 (AGMNGKTVDG…SYRDSYDSYG (100 aa)) is disordered. The segment covering 93–118 (YRGGSSGGGRGFFRGGRGRGGGGYGG) has biased composition (gly residues). Positions 155–164 (SYRDSYDSYG) are enriched in basic and acidic residues.

Interacts with prmt1. Interacts with elavl1/elrA (via RRM3). Associates with ribosomes. Methylated on arginine residues within RGG motifs. Methylation by prmt1 promotes cytoplasmic accumulation.

Its subcellular location is the nucleus. The protein localises to the nucleoplasm. It is found in the cytoplasm. Functionally, cold-inducible mRNA binding protein. Acts cooperatively with elavl1/elrA to stabilize AU-rich element (ARE)-containing mRNAs by binding to them and inhibiting their deadenylation. Essential for embryonic gastrulation and neural development, acting to maintain the expression of a set of adhesion molecules, and cell movement during embryogenesis. Required for pronephros development. May play a role in hibernation. In Aquarana catesbeiana (American bullfrog), this protein is Cold-inducible RNA-binding protein.